Reading from the N-terminus, the 147-residue chain is Basic phospholipase A2 beta-bungarotoxin A1 chain (147 aa).

The signal sequence occupies residues M1–A19. A propeptide spanning residues A20–L27 is cleaved from the precursor. Intrachain disulfides connect C54/C146, C56/C72, C71/C127, C78/C120, C88/C113, and C106/C118. Ca(2+) is bound by residues Y55, G57, and G59. The active site involves H75. D76 lines the Ca(2+) pocket. D121 is an active-site residue.

It belongs to the phospholipase A2 family. Group I subfamily. D49 sub-subfamily. In terms of assembly, heterodimer; disulfide-linked. The A chains have phospholipase A2 activity and the B chains show homology with the basic protease inhibitors. The cofactor is Ca(2+). In terms of tissue distribution, expressed by the venom gland.

The protein localises to the secreted. The enzyme catalyses a 1,2-diacyl-sn-glycero-3-phosphocholine + H2O = a 1-acyl-sn-glycero-3-phosphocholine + a fatty acid + H(+). Snake venom phospholipase A2 (PLA2) that inhibits neuromuscular transmission by blocking acetylcholine release from the nerve termini. PLA2 catalyzes the calcium-dependent hydrolysis of the 2-acyl groups in 3-sn-phosphoglycerides. The chain is Basic phospholipase A2 beta-bungarotoxin A1 chain from Bungarus caeruleus (Indian krait).